We begin with the raw amino-acid sequence, 126 residues long: MARIAGVDLPNNKRLEVALTYIYGIGWSRAREICEKTGIPCTKRVGELTPDELNTLRKFIDENYKVEGDLRREVQLNIKKLKDMGCYRGIRHARGLPVRGQQTRTNARTRKGKRKTVGGTKKAKAK.

The tract at residues 95–126 (GLPVRGQQTRTNARTRKGKRKTVGGTKKAKAK) is disordered. Basic residues predominate over residues 107 to 126 (ARTRKGKRKTVGGTKKAKAK).

It belongs to the universal ribosomal protein uS13 family. Part of the 30S ribosomal subunit. Forms a loose heterodimer with protein S19. Forms two bridges to the 50S subunit in the 70S ribosome.

Its function is as follows. Located at the top of the head of the 30S subunit, it contacts several helices of the 16S rRNA. In the 70S ribosome it contacts the 23S rRNA (bridge B1a) and protein L5 of the 50S subunit (bridge B1b), connecting the 2 subunits; these bridges are implicated in subunit movement. Contacts the tRNAs in the A and P-sites. The sequence is that of Small ribosomal subunit protein uS13 from Aquifex aeolicus (strain VF5).